The chain runs to 476 residues: FAD-dependent monooxygenase ausM (476 aa).

Residues Glu41, Gly55, and Arg114 each contribute to the FAD site. Residue Tyr222 is part of the active site. 2 residues coordinate FAD: Asp314 and Ala327. Residues 447-467 (LGSTPIHMLTLLLPCLFYFMY) traverse the membrane as a helical segment.

The protein belongs to the paxM FAD-dependent monooxygenase family. The cofactor is FAD.

It localises to the membrane. The protein operates within secondary metabolite biosynthesis; terpenoid biosynthesis. FAD-dependent monooxygenase; part of the gene cluster A that mediates the biosynthesis of the fungal meroterpenoid acetoxydehydroaustin. The first step of the pathway is the synthesis of 3,5-dimethylorsellinic acid by the polyketide synthase ausA. 3,5-dimethylorsellinic acid is then prenylated by the polyprenyl transferase ausN. Further epoxidation by the FAD-dependent monooxygenase ausM and cyclization by the probable terpene cyclase ausL lead to the formation of protoaustinoid A. Protoaustinoid A is then oxidized to spiro-lactone preaustinoid A3 by the combined action of the FAD-binding monooxygenases ausB and ausC, and the dioxygenase ausE. Acid-catalyzed keto-rearrangement and ring contraction of the tetraketide portion of preaustinoid A3 by ausJ lead to the formation of preaustinoid A4. The aldo-keto reductase ausK, with the help of ausH, is involved in the next step by transforming preaustinoid A4 into isoaustinone which is in turn hydroxylated by the P450 monooxygenase ausI to form austinolide. The cytochrome P450 monooxygenase ausG then modifies austinolide to austinol. Austinol is further acetylated to austin by the O-acetyltransferase ausP, which spontaneously changes to dehydroaustin. The cytochrome P450 monooxygenase then converts dehydroaustin is into 7-dehydrodehydroaustin. The hydroxylation catalyzed by ausR permits the second O-acetyltransferase ausQ to add an additional acetyl group to the molecule, leading to the formation of acetoxydehydroaustin. Due to genetic rearrangements of the clusters and the subsequent loss of some enzymes, the end product of the Penicillium brasilianum austinoid biosynthesis clusters is acetoxydehydroaustin. The protein is FAD-dependent monooxygenase ausM of Penicillium brasilianum.